Consider the following 245-residue polypeptide: Probable phosphatase YcdX (245 aa).

Zn(2+) contacts are provided by His-7, His-9, His-15, His-40, Glu-73, His-101, His-131, Asp-192, and His-194.

This sequence belongs to the PHP family. As to quaternary structure, homotrimer. Zn(2+) serves as cofactor.

This Escherichia coli O127:H6 (strain E2348/69 / EPEC) protein is Probable phosphatase YcdX.